Reading from the N-terminus, the 965-residue chain is Phosphoenolpyruvate carboxylase (965 aa).

At Ser-11 the chain carries Phosphoserine. Active-site residues include His-173 and Lys-601.

It belongs to the PEPCase type 1 family. In terms of assembly, homotetramer. It depends on Mg(2+) as a cofactor.

It is found in the cytoplasm. It catalyses the reaction oxaloacetate + phosphate = phosphoenolpyruvate + hydrogencarbonate. It functions in the pathway photosynthesis; C3 acid pathway. By light-reversible phosphorylation. Through the carboxylation of phosphoenolpyruvate (PEP) it forms oxaloacetate, a four-carbon dicarboxylic acid source for the tricarboxylic acid cycle. In Solanum tuberosum (Potato), this protein is Phosphoenolpyruvate carboxylase (PPC1).